The primary structure comprises 102 residues: Small ribosomal subunit protein uS10 (102 aa).

The protein belongs to the universal ribosomal protein uS10 family. As to quaternary structure, part of the 30S ribosomal subunit.

Involved in the binding of tRNA to the ribosomes. This chain is Small ribosomal subunit protein uS10, found in Allorhizobium ampelinum (strain ATCC BAA-846 / DSM 112012 / S4) (Agrobacterium vitis (strain S4)).